Consider the following 462-residue polypeptide: Jasmonoyl--L-amino acid synthetase GH3.3 (462 aa).

S103 provides a ligand contact to ATP. S106 provides a ligand contact to jasmonate. ATP is bound by residues T126, N172, and 337-342 (GASEGW). 170–174 (TTNVY) serves as a coordination point for an L-alpha-amino acid. Residues 334–337 (AEYG) and S339 each bind jasmonate.

Belongs to the IAA-amido conjugating enzyme family. Expressed in green shoots and flowers.

It catalyses the reaction a jasmonate + an L-alpha-amino acid + ATP = a jasmonyl-L-amino acid + AMP + diphosphate + H(+). Its function is as follows. Catalyzes the synthesis of jasmonate-amino acid conjugates by adenylation. Catalyzes the conjugation of jasmonate (JA) to Ile when expressed in a heterologous system (E.coli). Catalyzes in vitro the conjugation of jasmonate (JA) to Ile, Phe, Leu, Met, Val and Trp. May catalyze the synthesis of indole-3-acetic acid (IAA)-amino acid conjugates, providing a mechanism for the plant to cope with the presence of excess auxin. This is Jasmonoyl--L-amino acid synthetase GH3.3 from Oryza sativa subsp. japonica (Rice).